Here is a 163-residue protein sequence, read N- to C-terminus: 5-hydroxymethyl-dUMP N-hydrolase (163 aa).

Ala-2 is modified (N-acetylalanine). A 5-hydroxymethyl-dUMP-binding site is contributed by Gly-16. The residue at position 17 (Ser-17) is a Phosphoserine. 6 residues coordinate 5-hydroxymethyl-dUMP: Ile-18, Arg-19, Gly-20, Ser-87, Gly-89, and Glu-93. Residue Ser-87 is modified to Phosphoserine. A phosphoserine mark is found at Ser-112, Ser-117, Ser-127, and Ser-158. A 5-hydroxymethyl-dUMP-binding site is contributed by Ser-117.

As to quaternary structure, monomer and homodimer. As to expression, highly expressed in heart, kidney, liver and spleen. Weakly expressed in lung and skeletal muscle.

Its subcellular location is the cytoplasm. It localises to the nucleus. The catalysed reaction is 5-hydroxymethyl-dUMP + H2O = 5-hydroxymethyluracil + 2-deoxy-D-ribose 5-phosphate. Part of a nucleotide salvage pathway that eliminates epigenetically modified 5-hydroxymethyl-dCMP (hmdCMP) in a two-step process entailing deamination to cytotoxic 5-hydroxymethyl-dUMP (hmdUMP), followed by its hydrolysis into 5-hydroxymethyluracil (hmU) and 2-deoxy-D-ribose 5-phosphate (deoxyribosephosphate). Catalyzes the second step in that pathway, the hydrolysis of the N-glycosidic bond in hmdUMP, degrading this cytotoxic nucleotide to avoid its genomic integration. In Rattus norvegicus (Rat), this protein is 5-hydroxymethyl-dUMP N-hydrolase.